A 360-amino-acid chain; its full sequence is Phospho-N-acetylmuramoyl-pentapeptide-transferase (360 aa).

The next 10 helical transmembrane spans lie at 25-45 (RTIYASLTALVISFVLGPWLI), 73-93 (TMGGVLIMSAVMFSTLLWADL), 94-114 (TNAYVWIALGVTFGFGLIGFV), 134-154 (FCLQVVVAGIAGTVLVYGLNG), 173-193 (PGYVLFAILVMVGASNAVNLT), 198-218 (GLAIVPVAIAAGTYMIFAYVA), 240-260 (VFCGALVGAGLGFLWYNAYPA), 262-282 (IFMGDVGSLPLGGALGVVAIL), 287-307 (LALVIVGGLFVMEAVSVILQV), and 337-357 (KVIVRFWIIAIMLALLSVSTL).

It belongs to the glycosyltransferase 4 family. MraY subfamily. The cofactor is Mg(2+).

Its subcellular location is the cell inner membrane. It catalyses the reaction UDP-N-acetyl-alpha-D-muramoyl-L-alanyl-gamma-D-glutamyl-meso-2,6-diaminopimeloyl-D-alanyl-D-alanine + di-trans,octa-cis-undecaprenyl phosphate = di-trans,octa-cis-undecaprenyl diphospho-N-acetyl-alpha-D-muramoyl-L-alanyl-D-glutamyl-meso-2,6-diaminopimeloyl-D-alanyl-D-alanine + UMP. The protein operates within cell wall biogenesis; peptidoglycan biosynthesis. Functionally, catalyzes the initial step of the lipid cycle reactions in the biosynthesis of the cell wall peptidoglycan: transfers peptidoglycan precursor phospho-MurNAc-pentapeptide from UDP-MurNAc-pentapeptide onto the lipid carrier undecaprenyl phosphate, yielding undecaprenyl-pyrophosphoryl-MurNAc-pentapeptide, known as lipid I. The protein is Phospho-N-acetylmuramoyl-pentapeptide-transferase of Desulfatibacillum aliphaticivorans.